The following is a 457-amino-acid chain: tRNA modification GTPase MnmE (457 aa).

The (6S)-5-formyl-5,6,7,8-tetrahydrofolate site is built by R24, E81, and K124. Positions 220 to 379 constitute a TrmE-type G domain; the sequence is GIQLVLAGAP…LKQKILHVVG (160 aa). Position 230 (N230) interacts with K(+). Residues 230 to 235, 249 to 255, and 274 to 277 each bind GTP; these read NVGKSS, TPIAGTT, and DTAG. S234 is a binding site for Mg(2+). 3 residues coordinate K(+): T249, I251, and T254. T255 provides a ligand contact to Mg(2+). K457 is a (6S)-5-formyl-5,6,7,8-tetrahydrofolate binding site.

The protein belongs to the TRAFAC class TrmE-Era-EngA-EngB-Septin-like GTPase superfamily. TrmE GTPase family. As to quaternary structure, homodimer. Heterotetramer of two MnmE and two MnmG subunits. Requires K(+) as cofactor.

The protein resides in the cytoplasm. In terms of biological role, exhibits a very high intrinsic GTPase hydrolysis rate. Involved in the addition of a carboxymethylaminomethyl (cmnm) group at the wobble position (U34) of certain tRNAs, forming tRNA-cmnm(5)s(2)U34. In Polynucleobacter asymbioticus (strain DSM 18221 / CIP 109841 / QLW-P1DMWA-1) (Polynucleobacter necessarius subsp. asymbioticus), this protein is tRNA modification GTPase MnmE.